A 76-amino-acid polypeptide reads, in one-letter code: MGPMKVLLVMLVVMVAAPHIADARSQPGPTCPSSVQAILCDNRCGRSACSYYIERCACCAKCNRIPYYGASNHPGR.

The first 23 residues, 1–23 (MGPMKVLLVMLVVMVAAPHIADA), serve as a signal peptide directing secretion. Cystine bridges form between Cys31-Cys62, Cys40-Cys58, Cys44-Cys56, and Cys49-Cys59. Proline amide; partial is present on Pro74.

Belongs to the paralithocin family. The amidated form is probably the active form.

Has antibacterial activity, mainly against marine Gram-positive bacteria like C.maltaromaticum (MIC=25 uM), C.mobile (MIC=12.5 uM), C.divergens (MIC=25 uM) and C.funditum (MIC=12.5 uM) but also against C.glutamicum (MIC=12.5 uM). Has very little or no activity against Gram-negative bacteria. This Paralithodes camtschaticus (Red king crab) protein is Paralithocin 3.